We begin with the raw amino-acid sequence, 215 residues long: Endonuclease III (215 aa).

The HhH domain maps to Arg113 to Asn132. Residues Cys192, Cys199, Cys202, and Cys208 each coordinate [4Fe-4S] cluster.

This sequence belongs to the Nth/MutY family. [4Fe-4S] cluster is required as a cofactor.

It carries out the reaction 2'-deoxyribonucleotide-(2'-deoxyribose 5'-phosphate)-2'-deoxyribonucleotide-DNA = a 3'-end 2'-deoxyribonucleotide-(2,3-dehydro-2,3-deoxyribose 5'-phosphate)-DNA + a 5'-end 5'-phospho-2'-deoxyribonucleoside-DNA + H(+). Its function is as follows. DNA repair enzyme that has both DNA N-glycosylase activity and AP-lyase activity. The DNA N-glycosylase activity releases various damaged pyrimidines from DNA by cleaving the N-glycosidic bond, leaving an AP (apurinic/apyrimidinic) site. The AP-lyase activity cleaves the phosphodiester bond 3' to the AP site by a beta-elimination, leaving a 3'-terminal unsaturated sugar and a product with a terminal 5'-phosphate. The sequence is that of Endonuclease III from Buchnera aphidicola subsp. Baizongia pistaciae (strain Bp).